The chain runs to 253 residues: Mediator of RNA polymerase II transcription subunit 19 (253 aa).

Disordered regions lie at residues 18–49 (EQYS…TLKT) and 157–253 (GPLP…TQVF). Residues 21–40 (SPKSSPRAGGAGGRSPVVAR) show a composition bias toward low complexity. Composition is skewed to basic residues over residues 165–183 (HLKS…KHKY) and 220–233 (RKKR…KKQR).

Belongs to the Mediator complex subunit 19 family. Component of the Mediator complex.

Its subcellular location is the nucleus. Component of the Mediator complex, a coactivator involved in the regulated transcription of nearly all RNA polymerase II-dependent genes. Mediator functions as a bridge to convey information from gene-specific regulatory proteins to the basal RNA polymerase II transcription machinery. Mediator is recruited to promoters by direct interactions with regulatory proteins and serves as a scaffold for the assembly of a functional preinitiation complex with RNA polymerase II and the general transcription factors. The polypeptide is Mediator of RNA polymerase II transcription subunit 19 (MED19) (Aedes aegypti (Yellowfever mosquito)).